A 199-amino-acid chain; its full sequence is Cutinase CUT1 (199 aa).

The N-terminal stretch at 1 to 18 (MKFTTLATLALGAVSALA) is a signal peptide. The propeptide occupies 19–27 (APVTELESR). The residue at position 28 (Gln28) is a Pyrrolidone carboxylic acid. A disulfide bridge connects residues Cys31 and Cys105. Catalysis depends on Ser116, which acts as the Nucleophile. A disulfide bond links Cys164 and Cys171. Residue Asp168 is part of the active site. The Proton donor/acceptor role is filled by His181.

Belongs to the cutinase family. In terms of processing, the 2 disulfide bonds play a critical role in holding the catalytic residues in juxta-position; reduction of the disulfide bridges results in the complete inactivation of the enzyme.

It catalyses the reaction cutin + H2O = cutin monomers.. Catalyzes the hydrolysis of complex carboxylic polyesters found in the cell wall of plants. Degrades cutin, a macromolecule that forms the structure of the plant cuticle. Also degrades suberin, a specialized macromolecule found in the cell wall of various plant tissues. In Coprinopsis cinerea (Inky cap fungus), this protein is Cutinase CUT1.